A 63-amino-acid chain; its full sequence is Ferredoxin (63 aa).

In terms of domain architecture, 4Fe-4S ferredoxin-type spans 2 to 29 (KVTVDQDLCIACGTCIDLCPSVFDWDDE). Cys10, Cys13, Cys16, and Cys55 together coordinate [4Fe-4S] cluster.

[4Fe-4S] cluster serves as cofactor.

Ferredoxins are iron-sulfur proteins that transfer electrons in a wide variety of metabolic reactions. In Moorella thermoacetica (Clostridium thermoaceticum), this protein is Ferredoxin.